Consider the following 105-residue polypeptide: QPKAAPTVNLFPPSSEELGTNKATLVCLISDFYPGAVTVTWKAGGTTVTQGVETTKPSKQSNNKYAASSYLALSASDWKSSSGFTCQVTHEGTIVEKTVTPSECA.

Residues 2-100 form the Ig-like domain; the sequence is PKAAPTVNLF…EGTIVEKTVT (99 aa). A disulfide bridge connects residues cysteine 27 and cysteine 86.

This chain is Ig lambda chain C region, found in Sus scrofa (Pig).